The sequence spans 254 residues: Alcohol dehydrogenase 1 (254 aa).

10–33 (FVAGLGGIGFDTSREIVKKGPKNL) is a binding site for NAD(+). Ser138 contacts substrate. Tyr151 functions as the Proton acceptor in the catalytic mechanism.

Belongs to the short-chain dehydrogenases/reductases (SDR) family. In terms of assembly, homodimer.

It catalyses the reaction a primary alcohol + NAD(+) = an aldehyde + NADH + H(+). It carries out the reaction a secondary alcohol + NAD(+) = a ketone + NADH + H(+). This is Alcohol dehydrogenase 1 (Adh1) from Drosophila mojavensis (Fruit fly).